The primary structure comprises 208 residues: Large ribosomal subunit protein uL3 (208 aa).

Positions glycine 116 to alanine 148 are disordered.

Belongs to the universal ribosomal protein uL3 family. Part of the 50S ribosomal subunit. Forms a cluster with proteins L14 and L19.

In terms of biological role, one of the primary rRNA binding proteins, it binds directly near the 3'-end of the 23S rRNA, where it nucleates assembly of the 50S subunit. The protein is Large ribosomal subunit protein uL3 of Streptococcus pyogenes serotype M6 (strain ATCC BAA-946 / MGAS10394).